The sequence spans 237 residues: MPAATWTASPSPPNWPVPMPRRPPMPRSVKRDRWIALGLLLLVMGVAYLVLVHPWFTQPMLAVQDDLQSLRERELRVRVQLQQAPQVSQRLQQARQTLQSRPGFLPESSAELASAGLVQRLERAVVDASPGNRSCAISNRSPLQPETKRFTRVAVQVRLRCGTPELASVLYSLENGTPRLFVDNLNVMAQRYQLSPNESGNGLDIAFELAGYLRPGSNAGPVNTGAAPAAGEASNAP.

A disordered region spans residues 1–21 (MPAATWTASPSPPNWPVPMPR). Pro residues predominate over residues 10-21 (PSPPNWPVPMPR).

The sequence is that of Protein XpsM (xpsM) from Xanthomonas campestris pv. campestris (strain ATCC 33913 / DSM 3586 / NCPPB 528 / LMG 568 / P 25).